A 55-amino-acid polypeptide reads, in one-letter code: Large ribosomal subunit protein bL33 (55 aa).

Basic and acidic residues predominate over residues 1–11 (MAKGGREKIKL). The segment at 1 to 29 (MAKGGREKIKLESSAGTGHFYTTSKNKRT) is disordered. The segment covering 14-24 (SAGTGHFYTTS) has biased composition (polar residues).

The protein belongs to the bacterial ribosomal protein bL33 family.

In Polynucleobacter asymbioticus (strain DSM 18221 / CIP 109841 / QLW-P1DMWA-1) (Polynucleobacter necessarius subsp. asymbioticus), this protein is Large ribosomal subunit protein bL33.